Here is a 316-residue protein sequence, read N- to C-terminus: Ribosomal RNA small subunit methyltransferase H (316 aa).

Residues 42–44 (GGH), Asp62, Phe86, Asp104, and Gln111 contribute to the S-adenosyl-L-methionine site.

It belongs to the methyltransferase superfamily. RsmH family.

Its subcellular location is the cytoplasm. It catalyses the reaction cytidine(1402) in 16S rRNA + S-adenosyl-L-methionine = N(4)-methylcytidine(1402) in 16S rRNA + S-adenosyl-L-homocysteine + H(+). Specifically methylates the N4 position of cytidine in position 1402 (C1402) of 16S rRNA. This Polynucleobacter asymbioticus (strain DSM 18221 / CIP 109841 / QLW-P1DMWA-1) (Polynucleobacter necessarius subsp. asymbioticus) protein is Ribosomal RNA small subunit methyltransferase H.